A 342-amino-acid polypeptide reads, in one-letter code: Molybdate/tungstate-binding protein WtpA (342 aa).

The signal sequence occupies residues 1–24 (MHIGGGVVKIRILILLMLALFLLG). Molybdate is bound by residues 41 to 42 (GS), Ser-70, 153 to 155 (DPC), Glu-218, and Tyr-236. Residues 41–42 (GS), Ser-70, 153–155 (DPC), Glu-218, and Tyr-236 each bind tungstate.

Belongs to the bacterial solute-binding protein 1 family. WtpA subfamily. As to quaternary structure, the complex is composed of two ATP-binding proteins (WtpC), two transmembrane proteins (WtpB) and a solute-binding protein (WtpA).

The protein localises to the cell membrane. Its function is as follows. Part of the ABC transporter complex WtpABC involved in molybdate/tungstate import. Binds tungstate and molybdate. In Archaeoglobus fulgidus (strain ATCC 49558 / DSM 4304 / JCM 9628 / NBRC 100126 / VC-16), this protein is Molybdate/tungstate-binding protein WtpA (wtpA).